The following is a 227-amino-acid chain: Cytochrome c oxidase subunit 2 (227 aa).

At 1 to 14 (MAYPFQLGLQDASS) the chain is on the mitochondrial intermembrane side. Residues 15–45 (PIMEELTNFHDHTLMIVFLISSLVLYIISSM) form a helical membrane-spanning segment. Residues 46–59 (LTTKMTHTSTMDAQ) lie on the Mitochondrial matrix side of the membrane. A helical membrane pass occupies residues 60–87 (EVETIWTVLPAVILILIALPSLRILYMM). Topologically, residues 88 to 227 (DEINNPVLTV…HFENWSTSMI (140 aa)) are mitochondrial intermembrane. His-161, Cys-196, Glu-198, Cys-200, His-204, and Met-207 together coordinate Cu cation. Residue Glu-198 coordinates Mg(2+).

The protein belongs to the cytochrome c oxidase subunit 2 family. As to quaternary structure, component of the cytochrome c oxidase (complex IV, CIV), a multisubunit enzyme composed of 14 subunits. The complex is composed of a catalytic core of 3 subunits MT-CO1, MT-CO2 and MT-CO3, encoded in the mitochondrial DNA, and 11 supernumerary subunits COX4I, COX5A, COX5B, COX6A, COX6B, COX6C, COX7A, COX7B, COX7C, COX8 and NDUFA4, which are encoded in the nuclear genome. The complex exists as a monomer or a dimer and forms supercomplexes (SCs) in the inner mitochondrial membrane with NADH-ubiquinone oxidoreductase (complex I, CI) and ubiquinol-cytochrome c oxidoreductase (cytochrome b-c1 complex, complex III, CIII), resulting in different assemblies (supercomplex SCI(1)III(2)IV(1) and megacomplex MCI(2)III(2)IV(2)). Found in a complex with TMEM177, COA6, COX18, COX20, SCO1 and SCO2. Interacts with TMEM177 in a COX20-dependent manner. Interacts with COX20. Interacts with COX16. Requires Cu cation as cofactor.

It is found in the mitochondrion inner membrane. It catalyses the reaction 4 Fe(II)-[cytochrome c] + O2 + 8 H(+)(in) = 4 Fe(III)-[cytochrome c] + 2 H2O + 4 H(+)(out). Its function is as follows. Component of the cytochrome c oxidase, the last enzyme in the mitochondrial electron transport chain which drives oxidative phosphorylation. The respiratory chain contains 3 multisubunit complexes succinate dehydrogenase (complex II, CII), ubiquinol-cytochrome c oxidoreductase (cytochrome b-c1 complex, complex III, CIII) and cytochrome c oxidase (complex IV, CIV), that cooperate to transfer electrons derived from NADH and succinate to molecular oxygen, creating an electrochemical gradient over the inner membrane that drives transmembrane transport and the ATP synthase. Cytochrome c oxidase is the component of the respiratory chain that catalyzes the reduction of oxygen to water. Electrons originating from reduced cytochrome c in the intermembrane space (IMS) are transferred via the dinuclear copper A center (CU(A)) of subunit 2 and heme A of subunit 1 to the active site in subunit 1, a binuclear center (BNC) formed by heme A3 and copper B (CU(B)). The BNC reduces molecular oxygen to 2 water molecules using 4 electrons from cytochrome c in the IMS and 4 protons from the mitochondrial matrix. This is Cytochrome c oxidase subunit 2 (MT-CO2) from Lophuromys flavopunctatus (Yellow-spotted brush-furred rat).